A 181-amino-acid polypeptide reads, in one-letter code: Acetylcholinesterase (181 aa).

Catalysis depends on Ser76, which acts as the Acyl-ester intermediate. Glu132 functions as the Charge relay system in the catalytic mechanism. Residues 162–181 are disordered; it reads WQDQDNGGLPLTGNPTXPHN.

Belongs to the type-B carboxylesterase/lipase family. In terms of processing, the N-terminus is blocked. Expressed by the venom gland. Is also probably expressed by liver and muscle.

The protein localises to the synapse. Its subcellular location is the secreted. It localises to the cell membrane. It carries out the reaction acetylcholine + H2O = choline + acetate + H(+). In terms of biological role, in venom, its toxic role is unclear: it could result in less musculatory control by rapidly hydrolyzing acetylcholine, or that it works synergistically with alkaline phosphatase (ALP) in paralyzing prey through hypotension. In muscle, it terminates signal transduction at the neuromuscular junction by rapid hydrolysis of the acetylcholine released into the synaptic cleft. In liver, its function is unclear: it could serve as a safeguard against any diffusion of acetylcholine from synapses into the circulation. This Naja oxiana (Central Asian cobra) protein is Acetylcholinesterase (ACHE).